The chain runs to 137 residues: Phosphomevalonate dehydratase small subunit (137 aa).

The Proton acceptor role is filled by S65.

It belongs to the AcnX type II small subunit family. Heterodimer composed of a large subunit (PMDh-L) and a small subunit (PMDh-S).

The catalysed reaction is (R)-5-phosphomevalonate = (2E)-3-methyl-5-phosphooxypent-2-enoate + H2O. It participates in isoprenoid biosynthesis; isopentenyl diphosphate biosynthesis via mevalonate pathway. Component of a hydro-lyase that catalyzes the dehydration of mevalonate 5-phosphate (MVA5P) to form trans-anhydromevalonate 5-phosphate (tAHMP). Involved in the archaeal mevalonate (MVA) pathway, which provides fundamental precursors for isoprenoid biosynthesis, such as isopentenyl diphosphate (IPP) and dimethylallyl diphosphate (DMAPP). This is Phosphomevalonate dehydratase small subunit from Methanococcoides burtonii (strain DSM 6242 / NBRC 107633 / OCM 468 / ACE-M).